A 113-amino-acid polypeptide reads, in one-letter code: Large ribosomal subunit protein uL24 (113 aa).

It belongs to the universal ribosomal protein uL24 family. As to quaternary structure, part of the 50S ribosomal subunit.

In terms of biological role, one of two assembly initiator proteins, it binds directly to the 5'-end of the 23S rRNA, where it nucleates assembly of the 50S subunit. Functionally, one of the proteins that surrounds the polypeptide exit tunnel on the outside of the subunit. The protein is Large ribosomal subunit protein uL24 of Chlamydia abortus (strain DSM 27085 / S26/3) (Chlamydophila abortus).